A 339-amino-acid chain; its full sequence is Annexin A2 (339 aa).

N-acetylserine is present on Ser-2. Positions 2 to 24 (STVHEILCKLSLEGDHSTPASAY) are S100A10-binding site. A Phosphotyrosine; by SRC modification is found at Tyr-24. The residue at position 26 (Ser-26) is a Phosphoserine; by PKC. Annexin repeat units follow at residues 33-104 (FDAE…GLLK) and 105-176 (TPAQ…ALAK). Lys-49 bears the N6-acetyllysine; alternate mark. A Glycyl lysine isopeptide (Lys-Gly) (interchain with G-Cter in SUMO1); alternate cross-link involves residue Lys-49. Lys-49 is covalently cross-linked (Glycyl lysine isopeptide (Lys-Gly) (interchain with G-Cter in SUMO2); alternate). The residue at position 152 (Lys-152) is an N6-acetyllysine. The residue at position 184 (Ser-184) is a Phosphoserine. Annexin repeat units lie at residues 189 to 261 (ELID…NLVQ) and 265 to 336 (NKPL…YLCG). Tyr-199 carries the phosphotyrosine modification. Lys-227 carries the N6-acetyllysine modification.

The protein belongs to the annexin family. As to quaternary structure, heterotetramer containing 2 light chains of S100A10/p11 and 2 heavy chains of ANXA2/p36. Interacts with ATP1B1. Interacts with DYSF. Interacts with COCH. Interacts (via repeat Annexin 1) with PCSK9 (via the C-terminal domain); the interaction inhibits the degradation of LDLR. Interacts with CEACAM1 (via the cytoplasmic domain); this interaction is regulated by phosphorylation of CEACAM1. Interacts with APPL2 and APPL1; targets APPL2 to endosomes and acting in parallel to RAB5A. Interacts with S100A4. May interact with UBAP2. Interacts with PLEKHG4B; this interaction is required for PLEKHG4B localization to cell-cell adhesions. In terms of assembly, (Microbial infection) Interacts with classical swine fever virus envelope glycoprotein E2. ISGylated.

The protein localises to the secreted. Its subcellular location is the extracellular space. The protein resides in the extracellular matrix. It localises to the basement membrane. It is found in the melanosome. In terms of biological role, calcium-regulated membrane-binding protein whose affinity for calcium is greatly enhanced by anionic phospholipids. It binds two calcium ions with high affinity. May be involved in heat-stress response. Inhibits PCSK9-enhanced LDLR degradation, probably reduces PCSK9 protein levels via a translational mechanism but also competes with LDLR for binding with PCSK9. Binds to endosomes damaged by phagocytosis of particulate wear debris and participates in endosomal membrane stabilization, thereby limiting NLRP3 inflammasome activation. Required for endothelial cell surface plasmin generation and may support fibrinolytic surveillance and neoangiogenesis. (Microbial infection) May serve as a receptor for classical swine fever virus (CSFV). Promotes CSFV infection. The sequence is that of Annexin A2 (ANXA2) from Sus scrofa (Pig).